Reading from the N-terminus, the 283-residue chain is Shikimate dehydrogenase (NADP(+)) (283 aa).

Residues 16–18 and Thr63 each bind shikimate; that span reads SLS. Lys67 (proton acceptor) is an active-site residue. An NADP(+)-binding site is contributed by Asp79. Asn88 and Asp103 together coordinate shikimate. NADP(+) contacts are provided by residues 128-132, Ala223, and Gly243; that span reads GAGGA.

This sequence belongs to the shikimate dehydrogenase family. As to quaternary structure, homodimer.

It carries out the reaction shikimate + NADP(+) = 3-dehydroshikimate + NADPH + H(+). The protein operates within metabolic intermediate biosynthesis; chorismate biosynthesis; chorismate from D-erythrose 4-phosphate and phosphoenolpyruvate: step 4/7. Involved in the biosynthesis of the chorismate, which leads to the biosynthesis of aromatic amino acids. Catalyzes the reversible NADPH linked reduction of 3-dehydroshikimate (DHSA) to yield shikimate (SA). The protein is Shikimate dehydrogenase (NADP(+)) of Xanthomonas campestris pv. campestris (strain B100).